Reading from the N-terminus, the 189-residue chain is Dynactin subunit 6 (189 aa).

Belongs to the dynactin subunits 5/6 family. Dynactin subunit 6 subfamily. In terms of assembly, subunit of dynactin, a multiprotein complex part of a tripartite complex with dynein and a adapter, such as BICDL1, BICD2 or HOOK3. The dynactin complex is built around ACTR1A/ACTB filament and consists of an actin-related filament composed of a shoulder domain, a pointed end and a barbed end.

It is found in the cytoplasm. Its subcellular location is the cytoskeleton. Part of the dynactin complex that activates the molecular motor dynein for ultra-processive transport along microtubules. The chain is Dynactin subunit 6 (dynF) from Dictyostelium discoideum (Social amoeba).